A 241-amino-acid polypeptide reads, in one-letter code: Acetoacetyl-CoA reductase (241 aa).

NADP(+)-binding positions include 12 to 14 and 82 to 86; these read RGI and NAGIT. Substrate contacts are provided by residues D88 and 141–144; that span reads QMGQ. The Proton acceptor role is filled by Y147. Residue 177 to 180 participates in NADP(+) binding; that stretch reads PGYI. 178-179 serves as a coordination point for substrate; it reads GY.

The protein belongs to the short-chain dehydrogenases/reductases (SDR) family.

It is found in the cytoplasm. The enzyme catalyses a (3R)-3-hydroxyacyl-CoA + NADP(+) = a 3-oxoacyl-CoA + NADPH + H(+). The protein operates within biopolymer metabolism; poly-(R)-3-hydroxybutanoate biosynthesis. The protein is Acetoacetyl-CoA reductase of Shinella zoogloeoides (Crabtreella saccharophila).